The chain runs to 215 residues: uncharacterized protein (215 aa).

The next 5 membrane-spanning stretches (helical) occupy residues 1-21 (MTAE…AIGM), 36-56 (VLIG…FADV), 67-87 (SRIA…NILV), 92-112 (IVGL…MVIG), and 118-138 (LGIY…QLTF).

This sequence belongs to the MgtC/SapB family.

It localises to the cell inner membrane. This is an uncharacterized protein from Escherichia coli O157:H7.